A 204-amino-acid polypeptide reads, in one-letter code: Holliday junction branch migration complex subunit RuvA (204 aa).

Positions 1–63 (MIGKLSGKAD…EEHIHLYGFL (63 aa)) are domain I. A domain II region spans residues 64–142 (TLEEKNFFNL…KISSSSAIKD (79 aa)). The segment at 143–153 (SLNIKNITPVT) is flexible linker. The interval 153–204 (TSNEVMKALINLGFSRFEAQNVVQGIITQNPKISIDELIKTALKNRNSKFFS) is domain III.

This sequence belongs to the RuvA family. In terms of assembly, homotetramer. Forms an RuvA(8)-RuvB(12)-Holliday junction (HJ) complex. HJ DNA is sandwiched between 2 RuvA tetramers; dsDNA enters through RuvA and exits via RuvB. An RuvB hexamer assembles on each DNA strand where it exits the tetramer. Each RuvB hexamer is contacted by two RuvA subunits (via domain III) on 2 adjacent RuvB subunits; this complex drives branch migration. In the full resolvosome a probable DNA-RuvA(4)-RuvB(12)-RuvC(2) complex forms which resolves the HJ.

It is found in the cytoplasm. The RuvA-RuvB-RuvC complex processes Holliday junction (HJ) DNA during genetic recombination and DNA repair, while the RuvA-RuvB complex plays an important role in the rescue of blocked DNA replication forks via replication fork reversal (RFR). RuvA specifically binds to HJ cruciform DNA, conferring on it an open structure. The RuvB hexamer acts as an ATP-dependent pump, pulling dsDNA into and through the RuvAB complex. HJ branch migration allows RuvC to scan DNA until it finds its consensus sequence, where it cleaves and resolves the cruciform DNA. This is Holliday junction branch migration complex subunit RuvA from Rickettsia canadensis (strain McKiel).